Consider the following 333-residue polypeptide: Glycerol-3-phosphate dehydrogenase [NAD(P)+] (333 aa).

Residues serine 13, tyrosine 14, arginine 34, and lysine 108 each coordinate NADPH. Sn-glycerol 3-phosphate contacts are provided by lysine 108, glycine 137, and threonine 139. Alanine 141 contacts NADPH. Positions 193, 246, 256, 257, and 258 each coordinate sn-glycerol 3-phosphate. Lysine 193 functions as the Proton acceptor in the catalytic mechanism. Arginine 257 serves as a coordination point for NADPH. Residue glutamate 283 coordinates NADPH.

This sequence belongs to the NAD-dependent glycerol-3-phosphate dehydrogenase family.

It localises to the cytoplasm. It catalyses the reaction sn-glycerol 3-phosphate + NAD(+) = dihydroxyacetone phosphate + NADH + H(+). The enzyme catalyses sn-glycerol 3-phosphate + NADP(+) = dihydroxyacetone phosphate + NADPH + H(+). It participates in membrane lipid metabolism; glycerophospholipid metabolism. Functionally, catalyzes the reduction of the glycolytic intermediate dihydroxyacetone phosphate (DHAP) to sn-glycerol 3-phosphate (G3P), the key precursor for phospholipid synthesis. This Idiomarina loihiensis (strain ATCC BAA-735 / DSM 15497 / L2-TR) protein is Glycerol-3-phosphate dehydrogenase [NAD(P)+].